The following is a 395-amino-acid chain: 1-deoxy-D-xylulose 5-phosphate reductoisomerase (395 aa).

Residues Thr-15, Gly-16, Ser-17, Ile-18, Gly-41, Asn-43, and Asn-126 each contribute to the NADPH site. Lys-127 serves as a coordination point for 1-deoxy-D-xylulose 5-phosphate. Glu-128 lines the NADPH pocket. Mn(2+) is bound at residue Asp-152. Residues Ser-153, Glu-154, Ser-178, and His-201 each contribute to the 1-deoxy-D-xylulose 5-phosphate site. Glu-154 provides a ligand contact to Mn(2+). Residue Gly-207 coordinates NADPH. Residues Ser-214, Asn-219, Lys-220, and Glu-223 each coordinate 1-deoxy-D-xylulose 5-phosphate. Glu-223 lines the Mn(2+) pocket.

It belongs to the DXR family. Mg(2+) is required as a cofactor. Mn(2+) serves as cofactor.

It catalyses the reaction 2-C-methyl-D-erythritol 4-phosphate + NADP(+) = 1-deoxy-D-xylulose 5-phosphate + NADPH + H(+). Its pathway is isoprenoid biosynthesis; isopentenyl diphosphate biosynthesis via DXP pathway; isopentenyl diphosphate from 1-deoxy-D-xylulose 5-phosphate: step 1/6. Its function is as follows. Catalyzes the NADPH-dependent rearrangement and reduction of 1-deoxy-D-xylulose-5-phosphate (DXP) to 2-C-methyl-D-erythritol 4-phosphate (MEP). The sequence is that of 1-deoxy-D-xylulose 5-phosphate reductoisomerase from Ruegeria pomeroyi (strain ATCC 700808 / DSM 15171 / DSS-3) (Silicibacter pomeroyi).